Reading from the N-terminus, the 224-residue chain is Envelope glycoprotein L (224 aa).

An N-terminal signal peptide occupies residues 1 to 19; sequence MGILGWVGLIAVGVLCVRG. Positions 20-161 are interaction with gH; that stretch reads GLPSTEYVIR…FDYSRTRRCV (142 aa). The 179-residue stretch at 23-201 folds into the gL alphaherpesvirus-type domain; it reads STEYVIRSRV…LTTPPPIIAT (179 aa). Intrachain disulfides connect Cys44/Cys76 and Cys149/Cys160. Residues 161–224 form a disordered region; that stretch reads VGRQDLGPTN…RRRRPHSRRL (64 aa). Residues 213 to 224 are compositionally biased toward basic residues; it reads KSRRRRPHSRRL.

This sequence belongs to the herpesviridae glycoprotein L (gL) family. Alphaherpesvirinae gL subfamily. Interacts with glycoprotein H (gH); this interaction is necessary for the correct processing and cell surface expression of gH. The heterodimer gH/gL seems to interact with gB trimers during fusion.

It localises to the virion membrane. The protein localises to the host cell membrane. The protein resides in the host Golgi apparatus. Its subcellular location is the host trans-Golgi network. In terms of biological role, the heterodimer glycoprotein H-glycoprotein L is required for the fusion of viral and plasma membranes leading to virus entry into the host cell. Acts as a functional inhibitor of gH and maintains gH in an inhibited form. Upon binding to host integrins, gL dissociates from gH leading to activation of the viral fusion glycoproteins gB and gH. The chain is Envelope glycoprotein L from Human herpesvirus 1 (strain 17) (HHV-1).